A 374-amino-acid polypeptide reads, in one-letter code: MKPLLETLYLLGMLVPGGLGYDRSLAQHRQEIVDKSVSPWSLETYSYNIYHPMGEIYEWMREISEKYKEVVTQHFLGVTYETHPMYYLKISQPSGNPKKIIWMDCGIHAREWIAPAFCQWFVKEILQNHKDNSSIRKLLRNLDFYVLPVLNIDGYIYTWTTDRLWRKSRSPHNNGTCFGTDLNRNFNASWCSIGASRNCQDQTFCGTGPVSEPETKAVASFIESKKDDILCFLTMHSYGQLILTPYGYTKNKSSNHPEMIQVGQKAANALKAKYGTNYRVGSSADILYASSGSSRDWARDIGIPFSYTFELRDSGTYGFVLPEAQIQPTCEETMEAVLSVLDDVYAKHWHSDSAGRVTSATMLLGLLVSCMSLL.

Positions 1–20 are cleaved as a signal peptide; sequence MKPLLETLYLLGMLVPGGLG. The region spanning 49-344 is the Peptidase M14 domain; that stretch reads IYHPMGEIYE…EAVLSVLDDV (296 aa). Zn(2+) contacts are provided by H108 and E111. N-linked (GlcNAc...) asparagine glycans are attached at residues N132, N174, and N187. Position 236 (H236) interacts with Zn(2+). N251 carries N-linked (GlcNAc...) asparagine glycosylation. The active-site Proton donor/acceptor is E310. A lipid anchor (GPI-anchor amidated aspartate) is attached at D352. A propeptide spans 353–374 (removed in mature form); sequence SAGRVTSATMLLGLLVSCMSLL.

This sequence belongs to the peptidase M14 family. It depends on Zn(2+) as a cofactor. In terms of processing, N-glycosylated. As to expression, detected in enterocytes of the ileum.

It localises to the apical cell membrane. Its activity is regulated as follows. Strongly inhibited by potato carboxypeptidase inhibitor, and the chelating agents EDTA and 1,10-phenanthroline. Also inhibited by compounds with multiple carboxylic acid groups such as citrate and succinate, and to a lesser exent the amino acids aspartate and glutamate. Not significantly inhibited by benzylsuccinic acid. Carboxypeptidase which preferentially cleaves C-terminal acidic residues from peptides and proteins. Can also cleave C-terminal hydrophobic amino acids, with a preference for small residues over large residues. The sequence is that of Carboxypeptidase O from Homo sapiens (Human).